The chain runs to 636 residues: DNA gyrase subunit B (636 aa).

Positions 421-535 constitute a Toprim domain; it reads TELFIVEGDS…QGRVYIALPP (115 aa). Residues glutamate 427, aspartate 500, and aspartate 502 each contribute to the Mg(2+) site.

The protein belongs to the type II topoisomerase GyrB family. Heterotetramer, composed of two GyrA and two GyrB chains. In the heterotetramer, GyrA contains the active site tyrosine that forms a transient covalent intermediate with DNA, while GyrB binds cofactors and catalyzes ATP hydrolysis. Mg(2+) serves as cofactor. Mn(2+) is required as a cofactor. It depends on Ca(2+) as a cofactor.

It localises to the cytoplasm. It catalyses the reaction ATP-dependent breakage, passage and rejoining of double-stranded DNA.. In terms of biological role, a type II topoisomerase that negatively supercoils closed circular double-stranded (ds) DNA in an ATP-dependent manner to modulate DNA topology and maintain chromosomes in an underwound state. Negative supercoiling favors strand separation, and DNA replication, transcription, recombination and repair, all of which involve strand separation. Also able to catalyze the interconversion of other topological isomers of dsDNA rings, including catenanes and knotted rings. Type II topoisomerases break and join 2 DNA strands simultaneously in an ATP-dependent manner. This Thermotoga maritima (strain ATCC 43589 / DSM 3109 / JCM 10099 / NBRC 100826 / MSB8) protein is DNA gyrase subunit B.